A 118-amino-acid polypeptide reads, in one-letter code: Ribosome-binding factor A (118 aa).

It belongs to the RbfA family. Monomer. Binds 30S ribosomal subunits, but not 50S ribosomal subunits or 70S ribosomes.

The protein localises to the cytoplasm. Functionally, one of several proteins that assist in the late maturation steps of the functional core of the 30S ribosomal subunit. Associates with free 30S ribosomal subunits (but not with 30S subunits that are part of 70S ribosomes or polysomes). Required for efficient processing of 16S rRNA. May interact with the 5'-terminal helix region of 16S rRNA. This Thermodesulfovibrio yellowstonii (strain ATCC 51303 / DSM 11347 / YP87) protein is Ribosome-binding factor A.